The sequence spans 249 residues: 5'-nucleotidase SurE (249 aa).

A divalent metal cation-binding residues include Asp-8, Asp-9, Ser-39, and Asn-91.

The protein belongs to the SurE nucleotidase family. Requires a divalent metal cation as cofactor.

It localises to the cytoplasm. It carries out the reaction a ribonucleoside 5'-phosphate + H2O = a ribonucleoside + phosphate. Its function is as follows. Nucleotidase that shows phosphatase activity on nucleoside 5'-monophosphates. The chain is 5'-nucleotidase SurE from Haemophilus influenzae (strain 86-028NP).